The primary structure comprises 853 residues: MSDTNDQGNSGGRKPLTVVRKTSGTVKQSFSHGRSKQVVVETKKRRPVSSGGGQGGDSGPSTPSASDGMEAKLVALAAKLGITVAELKARQKVLEQRKAEEASRAKDTEAERAAQDRLRTEQERKQQEAREREEAELRRRAEEEAAKLADVASREAVERPSKAPRAAPAAQTPPAADGEADAGRSKRSSGGGASKPARDDRADRAREVATKPSRGDAERRRGKLTIASALGDDADRQRSLASVRRARERERERRVGGGDSNDKTSIEVTLPETITLQDLAQRMNERVADVVKFMFKQGEMLRGNDIVDADMAELIAGEFGHTVRRVSEADVEIGLEGTDDRDEDLQPRAPIVTIMGHVDHGKTSLLDALRKTDVAGGEAGGITQHIGAYQVQLKSGERITFLDTPGHAAFTAMRARGANATDIAILVVAADDSVKPQTIESISHAKAAGVPIVVAITKSDLHDANPEKVLTDLLQYDIQVEAMGGVTQAVKVSAKTGAGLDELTDAISIQAEILELKANPNRQADGVVIESKLDKGRGPVATVLVKRGTLKRGDIVVAGANWGKVRALVDERGQQLADAGPSLPVEVLGLDGAPDPGDAIVVVDSEARAREITEYRIRTKRQVAGNASVAARASLDQLMNRLKDGAIVTSELPIVLKGDVQGSVEAITMSLDKISTEEVRAKVIHGAVGGISESDVLLARSSNAPIFAFNVRANKQARDLAEREGVEIRYYSIIYDLLDDVKATLSGMLAPEKRETFLGYADILEVFNITKVGKVAGCRISEGKVMRGCGVRLLRDNVVIHEGKLKTLKRFKDEVSEVNAGMECGMAFERYDDIRVGDKIECFQVEEIARTLA.

Disordered regions lie at residues 1–68 (MSDT…ASDG) and 94–265 (LEQR…DKTS). A compositionally biased stretch (polar residues) spans 20 to 32 (RKTSGTVKQSFSH). Residues 94–161 (LEQRKAEEAS…ASREAVERPS (68 aa)) are compositionally biased toward basic and acidic residues. Positions 163–176 (APRAAPAAQTPPAA) are enriched in low complexity. Composition is skewed to basic and acidic residues over residues 196-219 (PARD…DAER) and 245-265 (RARE…DKTS). A tr-type G domain is found at 347–515 (PRAPIVTIMG…AISIQAEILE (169 aa)). The G1 stretch occupies residues 356-363 (GHVDHGKT). GTP is bound at residue 356–363 (GHVDHGKT). Residues 381–385 (GITQH) form a G2 region. Positions 403-406 (DTPG) are G3. GTP-binding positions include 403–407 (DTPGH) and 457–460 (TKSD). The G4 stretch occupies residues 457-460 (TKSD). The segment at 493–495 (SAK) is G5.

The protein belongs to the TRAFAC class translation factor GTPase superfamily. Classic translation factor GTPase family. IF-2 subfamily.

The protein resides in the cytoplasm. Functionally, one of the essential components for the initiation of protein synthesis. Protects formylmethionyl-tRNA from spontaneous hydrolysis and promotes its binding to the 30S ribosomal subunits. Also involved in the hydrolysis of GTP during the formation of the 70S ribosomal complex. This is Translation initiation factor IF-2 from Hyphomonas neptunium (strain ATCC 15444).